Consider the following 391-residue polypeptide: Ferrochelatase (391 aa).

Fe cation is bound by residues histidine 196 and glutamate 281.

The protein belongs to the ferrochelatase family.

It is found in the cytoplasm. It carries out the reaction heme b + 2 H(+) = protoporphyrin IX + Fe(2+). It participates in porphyrin-containing compound metabolism; protoheme biosynthesis; protoheme from protoporphyrin-IX: step 1/1. Functionally, catalyzes the ferrous insertion into protoporphyrin IX. This is Ferrochelatase from Synechococcus sp. (strain WH7803).